The chain runs to 356 residues: tRNA N6-adenosine threonylcarbamoyltransferase (356 aa).

The Fe cation site is built by H116 and H120. Residues 139-143 (IVSGG), D174, G187, D191, and N281 each bind substrate. D309 contributes to the Fe cation binding site.

It belongs to the KAE1 / TsaD family. Fe(2+) is required as a cofactor.

It localises to the cytoplasm. It catalyses the reaction L-threonylcarbamoyladenylate + adenosine(37) in tRNA = N(6)-L-threonylcarbamoyladenosine(37) in tRNA + AMP + H(+). Required for the formation of a threonylcarbamoyl group on adenosine at position 37 (t(6)A37) in tRNAs that read codons beginning with adenine. Is involved in the transfer of the threonylcarbamoyl moiety of threonylcarbamoyl-AMP (TC-AMP) to the N6 group of A37, together with TsaE and TsaB. TsaD likely plays a direct catalytic role in this reaction. This chain is tRNA N6-adenosine threonylcarbamoyltransferase, found in Frankia alni (strain DSM 45986 / CECT 9034 / ACN14a).